A 542-amino-acid chain; its full sequence is Chaperonin GroEL 2 (542 aa).

Residues 30 to 33, Lys51, 87 to 91, Gly415, and Asp496 each bind ATP; these read TLGP and DGTTT.

It belongs to the chaperonin (HSP60) family. In terms of assembly, forms a cylinder of 14 subunits composed of two heptameric rings stacked back-to-back. Interacts with the co-chaperonin GroES.

It is found in the cytoplasm. It catalyses the reaction ATP + H2O + a folded polypeptide = ADP + phosphate + an unfolded polypeptide.. Its function is as follows. Together with its co-chaperonin GroES, plays an essential role in assisting protein folding. The GroEL-GroES system forms a nano-cage that allows encapsulation of the non-native substrate proteins and provides a physical environment optimized to promote and accelerate protein folding. This chain is Chaperonin GroEL 2, found in Chelativorans sp. (strain BNC1).